Here is a 51-residue protein sequence, read N- to C-terminus: Large ribosomal subunit protein eL39x (51 aa).

It belongs to the eukaryotic ribosomal protein eL39 family.

This chain is Large ribosomal subunit protein eL39x (RPL39C), found in Oryza sativa subsp. japonica (Rice).